We begin with the raw amino-acid sequence, 407 residues long: Large ribosomal subunit protein uL3-like (407 aa).

Basic residues predominate over residues 1-31; that stretch reads MSHRKFSAPRHGHLGFLPHKRSRRHRGKVKS. The tract at residues 1 to 37 is disordered; it reads MSHRKFSAPRHGHLGFLPHKRSRRHRGKVKSWPRDDP.

It belongs to the universal ribosomal protein uL3 family. Component of the large ribosomal subunit (LSU). Part of a LSU subcomplex, the 5S RNP which is composed of the 5S RNA, RPL5 and RPL11. Interacts with NVL in an ATP-dependent manner. Interacts with RRP1B. Interacts with IPO5, IPO7 and KPNB1; these interactions may be involved in RPL5 nuclear import for the assembly of ribosomal subunits. Interacts with RRP1B. As to expression, expression is restricted to striated muscles.

In terms of biological role, heart- and skeletal muscle-specific component of the ribosome, which regulates muscle function. Component of the large ribosomal subunit in striated muscle cells: replaces the RPL3 paralog in the ribosome in these cells. The ribosome is a large ribonucleoprotein complex responsible for the synthesis of proteins in the cell. Inhibits myotube growth and muscle function. This chain is Large ribosomal subunit protein uL3-like, found in Mus musculus (Mouse).